A 246-amino-acid polypeptide reads, in one-letter code: Uridylate kinase (246 aa).

Residue 16-19 coordinates ATP; it reads KLGG. Gly57 serves as a coordination point for UMP. ATP contacts are provided by Gly58 and Arg62. Residues Asp77 and 138–145 each bind UMP; that span reads MGMPYFST. ATP-binding residues include Tyr171 and Asp174.

It belongs to the UMP kinase family. Homohexamer.

Its subcellular location is the cytoplasm. The enzyme catalyses UMP + ATP = UDP + ADP. The protein operates within pyrimidine metabolism; CTP biosynthesis via de novo pathway; UDP from UMP (UMPK route): step 1/1. Its activity is regulated as follows. Inhibited by UTP. In terms of biological role, catalyzes the reversible phosphorylation of UMP to UDP. The protein is Uridylate kinase of Corynebacterium jeikeium (strain K411).